The primary structure comprises 185 residues: Large ribosomal subunit protein uL5 (185 aa).

It belongs to the universal ribosomal protein uL5 family. In terms of assembly, part of the 50S ribosomal subunit; part of the 5S rRNA/L5/L18/L25 subcomplex. Contacts the 5S rRNA and the P site tRNA. Forms a bridge to the 30S subunit in the 70S ribosome.

This is one of the proteins that bind and probably mediate the attachment of the 5S RNA into the large ribosomal subunit, where it forms part of the central protuberance. In the 70S ribosome it contacts protein S13 of the 30S subunit (bridge B1b), connecting the 2 subunits; this bridge is implicated in subunit movement. Contacts the P site tRNA; the 5S rRNA and some of its associated proteins might help stabilize positioning of ribosome-bound tRNAs. This Bartonella quintana (strain Toulouse) (Rochalimaea quintana) protein is Large ribosomal subunit protein uL5.